We begin with the raw amino-acid sequence, 632 residues long: Phosphoglucomutase, chloroplastic (632 aa).

The N-terminal 72 residues, 1–72 (MAMESALTST…PSSPSTSVAQ (72 aa)), are a transit peptide targeting the chloroplast. Alpha-D-glucose 1,6-bisphosphate-binding residues include arginine 97 and serine 190. Catalysis depends on serine 190, which acts as the Phosphoserine intermediate. The Mg(2+) site is built by serine 190, aspartate 355, aspartate 357, and aspartate 359. Position 190 is a phosphoserine (serine 190). Aspartate 359, arginine 360, threonine 423, glutamate 442, serine 444, and lysine 455 together coordinate alpha-D-glucose 1,6-bisphosphate.

This sequence belongs to the phosphohexose mutase family. In terms of assembly, monomer. Requires Mg(2+) as cofactor.

Its subcellular location is the plastid. The protein localises to the chloroplast. It catalyses the reaction alpha-D-glucose 1-phosphate = alpha-D-glucose 6-phosphate. It carries out the reaction O-phospho-L-seryl-[protein] + alpha-D-glucose 1-phosphate = alpha-D-glucose 1,6-bisphosphate + L-seryl-[protein]. The enzyme catalyses alpha-D-glucose 1,6-bisphosphate + L-seryl-[protein] = O-phospho-L-seryl-[protein] + alpha-D-glucose 6-phosphate. Its activity is regulated as follows. Inhibited by the Calvin cycle intermediates fructose-1,6-bisphosphate and ribulose-1,5-bisphosphate. Catalyzes the reversible isomerization of alpha-D-glucose 1-phosphate to alpha-D-glucose 6-phosphate. The mechanism proceeds via the intermediate compound alpha-D-glucose 1,6-bisphosphate. This enzyme participates in both the breakdown and synthesis of glucose. Promotes gravitropic responses, negative in shoots but positive in roots, by facilitating starch granules (statoliths) formation. In Solanum tuberosum (Potato), this protein is Phosphoglucomutase, chloroplastic (PGMP).